The following is a 387-amino-acid chain: Na(+)/H(+) antiporter NhaA (387 aa).

Helical transmembrane passes span 16–36 (AGGV…NSSI), 53–73 (IEHY…GLEL), 89–109 (LLPI…HMFF), 118–138 (GSGI…SLLG), 147–167 (VFLT…IAIF), 171–191 (GIDV…FILN), 197–217 (ILWP…HSGV), 220–240 (TITG…PDSI), 251–271 (PVAF…IIDS), 283–303 (IGIF…FCAI), 321–341 (VIGV…ITLL), and 354–374 (IAIM…LKMT).

The protein belongs to the NhaA Na(+)/H(+) (TC 2.A.33) antiporter family.

Its subcellular location is the cell inner membrane. The enzyme catalyses Na(+)(in) + 2 H(+)(out) = Na(+)(out) + 2 H(+)(in). Its function is as follows. Na(+)/H(+) antiporter that extrudes sodium in exchange for external protons. The protein is Na(+)/H(+) antiporter NhaA of Cytophaga hutchinsonii (strain ATCC 33406 / DSM 1761 / CIP 103989 / NBRC 15051 / NCIMB 9469 / D465).